Consider the following 200-residue polypeptide: Imidazoleglycerol-phosphate dehydratase (200 aa).

The protein belongs to the imidazoleglycerol-phosphate dehydratase family.

The protein resides in the cytoplasm. The catalysed reaction is D-erythro-1-(imidazol-4-yl)glycerol 3-phosphate = 3-(imidazol-4-yl)-2-oxopropyl phosphate + H2O. It functions in the pathway amino-acid biosynthesis; L-histidine biosynthesis; L-histidine from 5-phospho-alpha-D-ribose 1-diphosphate: step 6/9. The protein is Imidazoleglycerol-phosphate dehydratase of Renibacterium salmoninarum (strain ATCC 33209 / DSM 20767 / JCM 11484 / NBRC 15589 / NCIMB 2235).